The sequence spans 182 residues: Nucleoside-triphosphatase THEP1 (182 aa).

Residues 10 to 17 (GRPGIGKT) and 102 to 109 (VVVIDEIG) contribute to the ATP site.

It belongs to the THEP1 NTPase family.

The catalysed reaction is a ribonucleoside 5'-triphosphate + H2O = a ribonucleoside 5'-diphosphate + phosphate + H(+). Its function is as follows. Has nucleotide phosphatase activity towards ATP, GTP, CTP, TTP and UTP. May hydrolyze nucleoside diphosphates with lower efficiency. The polypeptide is Nucleoside-triphosphatase THEP1 (Thermofilum pendens (strain DSM 2475 / Hrk 5)).